Reading from the N-terminus, the 251-residue chain is Triosephosphate isomerase (251 aa).

8–10 (NWK) is a substrate binding site. Catalysis depends on H97, which acts as the Electrophile. E170 acts as the Proton acceptor in catalysis. Substrate is bound by residues G176, S215, and 236 to 237 (GG).

This sequence belongs to the triosephosphate isomerase family. Homodimer.

Its subcellular location is the cytoplasm. The enzyme catalyses D-glyceraldehyde 3-phosphate = dihydroxyacetone phosphate. It participates in carbohydrate biosynthesis; gluconeogenesis. Its pathway is carbohydrate degradation; glycolysis; D-glyceraldehyde 3-phosphate from glycerone phosphate: step 1/1. Involved in the gluconeogenesis. Catalyzes stereospecifically the conversion of dihydroxyacetone phosphate (DHAP) to D-glyceraldehyde-3-phosphate (G3P). The polypeptide is Triosephosphate isomerase (Nitratidesulfovibrio vulgaris (strain ATCC 29579 / DSM 644 / CCUG 34227 / NCIMB 8303 / VKM B-1760 / Hildenborough) (Desulfovibrio vulgaris)).